Reading from the N-terminus, the 212-residue chain is ATP-dependent dethiobiotin synthetase BioD (212 aa).

13 to 18 (GIGKTV) contacts ATP. Thr-17 is a Mg(2+) binding site. Lys-33 is a catalytic residue. Ser-37 contributes to the substrate binding site. Glu-100 contributes to the Mg(2+) binding site. ATP contacts are provided by residues 100 to 103 (EGAG) and 184 to 186 (PRL).

The protein belongs to the dethiobiotin synthetase family. As to quaternary structure, homodimer. It depends on Mg(2+) as a cofactor.

The protein resides in the cytoplasm. It carries out the reaction (7R,8S)-7,8-diammoniononanoate + CO2 + ATP = (4R,5S)-dethiobiotin + ADP + phosphate + 3 H(+). It functions in the pathway cofactor biosynthesis; biotin biosynthesis; biotin from 7,8-diaminononanoate: step 1/2. Catalyzes a mechanistically unusual reaction, the ATP-dependent insertion of CO2 between the N7 and N8 nitrogen atoms of 7,8-diaminopelargonic acid (DAPA, also called 7,8-diammoniononanoate) to form a ureido ring. This is ATP-dependent dethiobiotin synthetase BioD from Brucella anthropi (strain ATCC 49188 / DSM 6882 / CCUG 24695 / JCM 21032 / LMG 3331 / NBRC 15819 / NCTC 12168 / Alc 37) (Ochrobactrum anthropi).